A 309-amino-acid chain; its full sequence is Probable non-structural 36.3 kDa protein (309 aa).

This Avena sativa (Oat) protein is Probable non-structural 36.3 kDa protein (S6).